Here is a 448-residue protein sequence, read N- to C-terminus: Squalene synthase ERG9 (448 aa).

Residues 420–440 (RIEPGNFNCNVVLFGIGALIL) traverse the membrane as a helical segment.

The protein belongs to the phytoene/squalene synthase family. Mg(2+) is required as a cofactor.

The protein localises to the endoplasmic reticulum membrane. Its subcellular location is the microsome. The catalysed reaction is 2 (2E,6E)-farnesyl diphosphate + NADPH + H(+) = squalene + 2 diphosphate + NADP(+). It catalyses the reaction 2 (2E,6E)-farnesyl diphosphate + NADH + H(+) = squalene + 2 diphosphate + NAD(+). The protein operates within terpene metabolism; lanosterol biosynthesis; lanosterol from farnesyl diphosphate: step 1/3. Functionally, squalene synthase; part of the third module of ergosterol biosynthesis pathway that includes the late steps of the pathway. ERG9 produces squalene from 2 farnesyl pyrophosphate moieties. The third module or late pathway involves the ergosterol synthesis itself through consecutive reactions that mainly occur in the endoplasmic reticulum (ER) membrane. Firstly, the squalene synthase ERG9 catalyzes the condensation of 2 farnesyl pyrophosphate moieties to form squalene, which is the precursor of all steroids. Squalene synthase is crucial for balancing the incorporation of farnesyl diphosphate (FPP) into sterol and nonsterol isoprene synthesis. Secondly, the squalene epoxidase ERG1 catalyzes the stereospecific oxidation of squalene to (S)-2,3-epoxysqualene, which is considered to be a rate-limiting enzyme in steroid biosynthesis. Then, the lanosterol synthase ERG7 catalyzes the cyclization of (S)-2,3 oxidosqualene to lanosterol, a reaction that forms the sterol core. In the next steps, lanosterol is transformed to zymosterol through a complex process involving various demethylation, reduction and desaturation reactions. The lanosterol 14-alpha-demethylase ERG11 (also known as CYP51) catalyzes C14-demethylation of lanosterol to produce 4,4'-dimethyl cholesta-8,14,24-triene-3-beta-ol, which is critical for ergosterol biosynthesis. The C-14 reductase ERG24 reduces the C14=C15 double bond of 4,4-dimethyl-cholesta-8,14,24-trienol to produce 4,4-dimethyl-cholesta-8,24-dienol. 4,4-dimethyl-cholesta-8,24-dienol is substrate of the C-4 demethylation complex ERG25-ERG26-ERG27 in which ERG25 catalyzes the three-step monooxygenation required for the demethylation of 4,4-dimethyl and 4alpha-methylsterols, ERG26 catalyzes the oxidative decarboxylation that results in a reduction of the 3-beta-hydroxy group at the C-3 carbon to an oxo group, and ERG27 is responsible for the reduction of the keto group on the C-3. ERG28 has a role as a scaffold to help anchor ERG25, ERG26 and ERG27 to the endoplasmic reticulum and ERG29 regulates the activity of the iron-containing C4-methylsterol oxidase ERG25. Then, the sterol 24-C-methyltransferase ERG6 catalyzes the methyl transfer from S-adenosyl-methionine to the C-24 of zymosterol to form fecosterol. The C-8 sterol isomerase ERG2 catalyzes the reaction which results in unsaturation at C-7 in the B ring of sterols and thus converts fecosterol to episterol. The sterol-C5-desaturase ERG3 then catalyzes the introduction of a C-5 double bond in the B ring to produce 5-dehydroepisterol. The C-22 sterol desaturase ERG5 further converts 5-dehydroepisterol into ergosta-5,7,22,24(28)-tetraen-3beta-ol by forming the C-22(23) double bond in the sterol side chain. Finally, ergosta-5,7,22,24(28)-tetraen-3beta-ol is substrate of the C-24(28) sterol reductase ERG4 to produce ergosterol. The chain is Squalene synthase ERG9 from Candida albicans (Yeast).